A 121-amino-acid polypeptide reads, in one-letter code: Small ribosomal subunit protein uS13 (121 aa).

The segment at H91–K121 is disordered.

Belongs to the universal ribosomal protein uS13 family. In terms of assembly, part of the 30S ribosomal subunit. Forms a loose heterodimer with protein S19. Forms two bridges to the 50S subunit in the 70S ribosome.

Functionally, located at the top of the head of the 30S subunit, it contacts several helices of the 16S rRNA. In the 70S ribosome it contacts the 23S rRNA (bridge B1a) and protein L5 of the 50S subunit (bridge B1b), connecting the 2 subunits; these bridges are implicated in subunit movement. Contacts the tRNAs in the A and P-sites. The polypeptide is Small ribosomal subunit protein uS13 (Staphylococcus epidermidis (strain ATCC 35984 / DSM 28319 / BCRC 17069 / CCUG 31568 / BM 3577 / RP62A)).